Consider the following 204-residue polypeptide: Uridylate kinase (204 aa).

Position 26-31 (26-31) interacts with ATP; it reads GAGKGT. The tract at residues 46–76 is NMP; sequence SAGDLLRAEQGRAGSQYGELIKNCIKEGQIV. Residues arginine 52, 74 to 76, 104 to 107, and glutamine 111 contribute to the a ribonucleoside 5'-phosphate site; these read QIV and GFPR. The interval 141–151 is LID; that stretch reads ERGKTSGRSDD. Arginine 142 contacts ATP. A ribonucleoside 5'-phosphate contacts are provided by arginine 148 and arginine 159. An ATP-binding site is contributed by arginine 187.

Belongs to the adenylate kinase family. UMP-CMP kinase subfamily. As to quaternary structure, monomer. It depends on Mg(2+) as a cofactor.

It localises to the cytoplasm. It is found in the nucleus. It carries out the reaction UMP + ATP = UDP + ADP. Functionally, catalyzes the phosphorylation of pyrimidine nucleoside monophosphates at the expense of ATP. Plays an important role in de novo pyrimidine nucleotide biosynthesis. Has preference for UMP and dUMP as phosphate acceptors, but can also use CMP, dCMP, AMP, GMP, dGMP and dTMP. ATP and dATP are the best phosphate donors, but can also use GTP, dGTP, dCTP, and dTTP to some degree. The sequence is that of Uridylate kinase from Saccharomyces cerevisiae (strain ATCC 204508 / S288c) (Baker's yeast).